A 353-amino-acid polypeptide reads, in one-letter code: Ferredoxin--NADP reductase (353 aa).

FAD contacts are provided by Thr-25, Glu-44, Gln-52, Tyr-57, Val-97, Phe-132, Asp-298, and Ser-339.

This sequence belongs to the ferredoxin--NADP reductase type 2 family. As to quaternary structure, homodimer. The cofactor is FAD.

The enzyme catalyses 2 reduced [2Fe-2S]-[ferredoxin] + NADP(+) + H(+) = 2 oxidized [2Fe-2S]-[ferredoxin] + NADPH. This Chlorobium chlorochromatii (strain CaD3) protein is Ferredoxin--NADP reductase.